The sequence spans 268 residues: 26S proteasome regulatory subunit RPN10 (268 aa).

The VWFA domain occupies 5–190 (ATVLVIDNSE…LYENIASSPI (186 aa)). One can recognise a UIM domain in the interval 223–242 (SMDPELAMALRLSMEEEQQR). The tract at residues 226 to 268 (PELAMALRLSMEEEQQRQERLRQQQQQQDQPEQSEQPEQHQDK) is disordered. Residues 235–247 (SMEEEQQRQERLR) show a composition bias toward basic and acidic residues. Low complexity predominate over residues 248–261 (QQQQQQDQPEQSEQ).

Belongs to the proteasome subunit S5A family. In terms of assembly, the 26S proteasome is composed of a core protease, known as the 20S proteasome, capped at one or both ends by the 19S regulatory complex (RC). The RC is composed of at least 18 different subunits in two subcomplexes, the base and the lid, which form the portions proximal and distal to the 20S proteolytic core, respectively. Post-translationally, ubiquitinated, leading to its degradation. Ubiquitination is promoted by HUL5.

Functionally, multiubiquitin binding protein. The protein is 26S proteasome regulatory subunit RPN10 (RPN10) of Saccharomyces cerevisiae (strain ATCC 204508 / S288c) (Baker's yeast).